The sequence spans 194 residues: Protein GrpE (194 aa).

2 stretches are compositionally biased toward basic and acidic residues: residues 1 to 19 (MSKE…ENTS) and 26 to 44 (KKEA…NQKL). The disordered stretch occupies residues 1-44 (MSKEEFPSEKNLDKEENTSKPKKAVKKEAAKGEETKKNNENQKL).

Belongs to the GrpE family. As to quaternary structure, homodimer.

It is found in the cytoplasm. Participates actively in the response to hyperosmotic and heat shock by preventing the aggregation of stress-denatured proteins, in association with DnaK and GrpE. It is the nucleotide exchange factor for DnaK and may function as a thermosensor. Unfolded proteins bind initially to DnaJ; upon interaction with the DnaJ-bound protein, DnaK hydrolyzes its bound ATP, resulting in the formation of a stable complex. GrpE releases ADP from DnaK; ATP binding to DnaK triggers the release of the substrate protein, thus completing the reaction cycle. Several rounds of ATP-dependent interactions between DnaJ, DnaK and GrpE are required for fully efficient folding. In Lactobacillus acidophilus (strain ATCC 700396 / NCK56 / N2 / NCFM), this protein is Protein GrpE.